Consider the following 271-residue polypeptide: Signal recognition particle receptor subunit beta (271 aa).

A helical transmembrane segment spans residues 37–57 (LLSVVVAVLAVLLTLVFWKLI). GTP-binding positions include 71 to 79 (GLCDSGKTL) and 92 to 95 (TQTS). Phosphoserine is present on Ser-112. Gly-120 serves as a coordination point for GTP. Phosphothreonine is present on Thr-214. Ala-248 serves as a coordination point for GTP.

The protein belongs to the SRP receptor beta subunit family. Heterodimer with SRPRA.

The protein localises to the endoplasmic reticulum membrane. Component of the signal recognition particle (SRP) complex receptor (SR). Ensures, in conjunction with the SRP complex, the correct targeting of the nascent secretory proteins to the endoplasmic reticulum membrane system. May mediate the membrane association of SR. The chain is Signal recognition particle receptor subunit beta (SRPRB) from Homo sapiens (Human).